The following is a 276-amino-acid chain: Glucosamine-6-phosphate deaminase 2 (276 aa).

Residue D72 is the Proton acceptor; for enolization step of the active site. The stretch at 103–131 (NAHILDGNAADLQAECDAFEEKIKEAGGI) forms a coiled coil. D141 serves as the catalytic For ring-opening step. H143 (proton acceptor; for ring-opening step) is an active-site residue. The active-site For ring-opening step is E148. Position 161 is a phosphothreonine (T161).

Belongs to the glucosamine/galactosamine-6-phosphate isomerase family. Homohexamer.

The protein localises to the cytoplasm. It carries out the reaction alpha-D-glucosamine 6-phosphate + H2O = beta-D-fructose 6-phosphate + NH4(+). It functions in the pathway nucleotide-sugar biosynthesis; UDP-N-acetyl-alpha-D-glucosamine biosynthesis; alpha-D-glucosamine 6-phosphate from D-fructose 6-phosphate: step 1/1. Allosterically activated by N-acetylglucosamine-6-phosphate (GlcNAc6P). In terms of biological role, catalyzes the reversible conversion of alpha-D-glucosamine 6-phosphate (GlcN-6P) into beta-D-fructose 6-phosphate (Fru-6P) and ammonium ion, a regulatory reaction step in de novo uridine diphosphate-N-acetyl-alpha-D-glucosamine (UDP-GlcNAc) biosynthesis via hexosamine pathway. Deamination is coupled to aldo-keto isomerization mediating the metabolic flux from UDP-GlcNAc toward Fru-6P. At high ammonium level can drive amination and isomerization of Fru-6P toward hexosamines and UDP-GlcNAc synthesis. Has a role in fine tuning the metabolic fluctuations of cytosolic UDP-GlcNAc and their effects on hyaluronan synthesis that occur during tissue remodeling. The chain is Glucosamine-6-phosphate deaminase 2 from Mus musculus (Mouse).